We begin with the raw amino-acid sequence, 428 residues long: Enolase (428 aa).

Gln163 provides a ligand contact to (2R)-2-phosphoglycerate. Glu205 functions as the Proton donor in the catalytic mechanism. Asp242, Glu286, and Asp313 together coordinate Mg(2+). 4 residues coordinate (2R)-2-phosphoglycerate: Lys338, Arg367, Ser368, and Lys389. The active-site Proton acceptor is Lys338.

Belongs to the enolase family. Requires Mg(2+) as cofactor.

The protein localises to the cytoplasm. It localises to the secreted. It is found in the cell surface. It carries out the reaction (2R)-2-phosphoglycerate = phosphoenolpyruvate + H2O. It participates in carbohydrate degradation; glycolysis; pyruvate from D-glyceraldehyde 3-phosphate: step 4/5. Its function is as follows. Catalyzes the reversible conversion of 2-phosphoglycerate (2-PG) into phosphoenolpyruvate (PEP). It is essential for the degradation of carbohydrates via glycolysis. The polypeptide is Enolase (Acidovorax sp. (strain JS42)).